The primary structure comprises 275 residues: Probable ribosomal RNA small subunit methyltransferase A (275 aa).

5 residues coordinate S-adenosyl-L-methionine: leucine 13, glycine 38, glutamate 59, aspartate 84, and asparagine 101.

Belongs to the class I-like SAM-binding methyltransferase superfamily. rRNA adenine N(6)-methyltransferase family. RsmA subfamily.

The protein resides in the cytoplasm. In terms of biological role, specifically dimethylates two adjacent adenosines in the loop of a conserved hairpin near the 3'-end of 16S rRNA in the 30S particle. May play a critical role in biogenesis of 30S subunits. The sequence is that of Probable ribosomal RNA small subunit methyltransferase A from Methanocaldococcus jannaschii (strain ATCC 43067 / DSM 2661 / JAL-1 / JCM 10045 / NBRC 100440) (Methanococcus jannaschii).